The following is a 280-amino-acid chain: Shikimate dehydrogenase (NADP(+)) (280 aa).

Shikimate contacts are provided by residues 15–17 (SLS) and T62. The active-site Proton acceptor is K66. Residues N88 and D104 each contribute to the shikimate site. Residues 128 to 132 (GAGGA), 151 to 156 (NRTEER), and I222 contribute to the NADP(+) site. Position 224 (Y224) interacts with shikimate. G245 lines the NADP(+) pocket.

Belongs to the shikimate dehydrogenase family. Homodimer.

The enzyme catalyses shikimate + NADP(+) = 3-dehydroshikimate + NADPH + H(+). It functions in the pathway metabolic intermediate biosynthesis; chorismate biosynthesis; chorismate from D-erythrose 4-phosphate and phosphoenolpyruvate: step 4/7. In terms of biological role, involved in the biosynthesis of the chorismate, which leads to the biosynthesis of aromatic amino acids. Catalyzes the reversible NADPH linked reduction of 3-dehydroshikimate (DHSA) to yield shikimate (SA). In Methanosarcina acetivorans (strain ATCC 35395 / DSM 2834 / JCM 12185 / C2A), this protein is Shikimate dehydrogenase (NADP(+)).